The chain runs to 152 residues: UPF0178 protein YaiI (152 aa).

The protein belongs to the UPF0178 family.

This is UPF0178 protein YaiI from Shigella flexneri.